The sequence spans 1413 residues: ABC-type transporter vrcC (1413 aa).

The ABC transporter 1 domain maps to 108–365 (VWFEALALAR…FLDMGFACPE (258 aa)). N-linked (GlcNAc...) asparagine glycosylation occurs at asparagine 289. Residues 476–496 (VTISSLIGNVITALVIASIFY) traverse the membrane as a helical segment. Asparagine 501 carries an N-linked (GlcNAc...) asparagine glycan. 2 helical membrane-spanning segments follow: residues 510 to 530 (ALLFFACLINALGCGLEMLTL) and 564 to 584 (VLNAILSLVQALPFCAVVLLG). Asparagine 675 carries an N-linked (GlcNAc...) asparagine glycan. Residues 683–703 (IGIILAFMVVLGAIYLVATDF) form a helical membrane-spanning segment. The interval 725–748 (SGKPDDFEGGSDRNASQEKSKSDR) is disordered. N-linked (GlcNAc...) asparagine glycosylation is present at asparagine 738. Over residues 739–748 (ASQEKSKSDR) the composition is skewed to basic and acidic residues. An ABC transporter 2 domain is found at 761-1003 (FQWQDVCFDI…ILIDYFVRNG (243 aa)). 6 consecutive transmembrane segments (helical) span residues 1105–1125 (IYIYSKAILCVLPALFVGFSL), 1142–1162 (IFLLLIQFGQLIQQIMPHFVT), 1191–1211 (LFWNSLMSILMFLCWYYPIGM), 1230–1250 (LLIWTFLLFSSTFAHFMIAAL), 1266–1286 (LCLLFCGVLATPAQLPGFWIF), and 1290–1310 (VSPFTYLVSGMLAVGIADTTV). An N-linked (GlcNAc...) asparagine glycan is attached at asparagine 1324. The helical transmembrane segment at 1378 to 1398 (FGLMWVFIFTNIVAACLLYWW) threads the bilayer.

Belongs to the ABC transporter superfamily. ABCG family. PDR (TC 3.A.1.205) subfamily.

It localises to the cell membrane. Functionally, ABC-type transporter; part of the gene cluster that mediates the biosynthesis of the sesterterpene variecolin. VrcC is probably involved in the secretion of variecolin. The polypeptide is ABC-type transporter vrcC (Aspergillus aculeatus (strain ATCC 16872 / CBS 172.66 / WB 5094)).